Here is a 1227-residue protein sequence, read N- to C-terminus: Pre-mRNA-splicing factor ATP-dependent RNA helicase PRP16 (1227 aa).

G2 is modified (N-acetylglycine). A Phosphoserine modification is found at S56. Positions 60-89 (REREEKDDGEDKKKSKVSSYKDWEESKDDQ) are enriched in basic and acidic residues. Residues 60–320 (REREEKDDGE…ERQQWEDDQR (261 aa)) are disordered. T117 is modified (phosphothreonine). Over residues 128–201 (FWERSRQRER…SRRNEPESPR (74 aa)) the composition is skewed to basic and acidic residues. S199 and S224 each carry phosphoserine. Positions 222–239 (YGSSRRSQWESPSPTPSY) are enriched in polar residues. Over residues 240 to 263 (RDSERSHRLSTRDRDRSVRGKYSD) the composition is skewed to basic and acidic residues. Residue K260 is modified to N6-acetyllysine. Positions 300–310 (GEEGISFDTEE) are enriched in acidic residues. Basic and acidic residues predominate over residues 311-320 (ERQQWEDDQR). Residues K482, K483, and K504 each participate in a glycyl lysine isopeptide (Lys-Gly) (interchain with G-Cter in SUMO2) cross-link. Positions 542–705 (LTIIRDNSIV…FGNVPIFHIP (164 aa)) constitute a Helicase ATP-binding domain. Position 555 to 562 (555 to 562 (GETGSGKT)) interacts with ATP. A DEAH box motif is present at residues 652-655 (DEAH). Positions 727–902 (AVKQSLQVHL…NVVLLLKSLG (176 aa)) constitute a Helicase C-terminal domain. Residues 1155–1227 (GKSRQENRRR…PRRTPARFGL (73 aa)) form a disordered region. 2 stretches are compositionally biased toward basic and acidic residues: residues 1157–1169 (SRQE…KEEA) and 1181–1194 (EQLR…EKRS). A Glycyl lysine isopeptide (Lys-Gly) (interchain with G-Cter in SUMO2) cross-link involves residue K1166. The residue at position 1194 (S1194) is a Phosphoserine.

Belongs to the DEAD box helicase family. DEAH subfamily. PRP16 sub-subfamily. As to quaternary structure, identified in the spliceosome C complex.

Its subcellular location is the nucleus. The enzyme catalyses ATP + H2O = ADP + phosphate + H(+). Functionally, probable ATP-binding RNA helicase. Involved in pre-mRNA splicing as component of the spliceosome. This chain is Pre-mRNA-splicing factor ATP-dependent RNA helicase PRP16 (DHX38), found in Homo sapiens (Human).